The following is a 192-amino-acid chain: Fe/S biogenesis protein NfuA (192 aa).

[4Fe-4S] cluster contacts are provided by C149 and C152.

Belongs to the NfuA family. As to quaternary structure, homodimer. Requires [4Fe-4S] cluster as cofactor.

Involved in iron-sulfur cluster biogenesis. Binds a 4Fe-4S cluster, can transfer this cluster to apoproteins, and thereby intervenes in the maturation of Fe/S proteins. Could also act as a scaffold/chaperone for damaged Fe/S proteins. This is Fe/S biogenesis protein NfuA from Shewanella sp. (strain ANA-3).